A 397-amino-acid polypeptide reads, in one-letter code: Elongation factor Tu (397 aa).

The tr-type G domain occupies 10 to 206; sequence KPHVNIGTIG…AVDESIPDPV (197 aa). A G1 region spans residues 19 to 26; it reads GHVDHGKT. Residue 19 to 26 coordinates GTP; the sequence is GHVDHGKT. Thr26 provides a ligand contact to Mg(2+). The interval 62–66 is G2; sequence GITIN. Residues 83 to 86 form a G3 region; it reads DAPG. GTP is bound by residues 83–87 and 138–141; these read DAPGH and NKSD. The segment at 138-141 is G4; that stretch reads NKSD. The tract at residues 176–178 is G5; the sequence is SAL.

This sequence belongs to the TRAFAC class translation factor GTPase superfamily. Classic translation factor GTPase family. EF-Tu/EF-1A subfamily. Monomer.

It localises to the cytoplasm. It carries out the reaction GTP + H2O = GDP + phosphate + H(+). GTP hydrolase that promotes the GTP-dependent binding of aminoacyl-tRNA to the A-site of ribosomes during protein biosynthesis. This is Elongation factor Tu from Mycobacteroides abscessus (strain ATCC 19977 / DSM 44196 / CCUG 20993 / CIP 104536 / JCM 13569 / NCTC 13031 / TMC 1543 / L948) (Mycobacterium abscessus).